Consider the following 79-residue polypeptide: Dolichyl-diphosphooligosaccharide--protein glycosyltransferase subunit TMEM258 (79 aa).

The next 2 helical transmembrane spans lie at 17–37 (VFPHLTVVLLAIGMFFKAWFF) and 59–79 (VASLFMGFGVHFLLLWVGIFV).

The protein belongs to the OST5 family. In terms of assembly, component of the oligosaccharyltransferase (OST) complex.

The protein resides in the membrane. Its subcellular location is the endoplasmic reticulum. It is found in the cytoplasm. It participates in protein modification; protein glycosylation. Functionally, subunit of the oligosaccharyl transferase (OST) complex that catalyzes the initial transfer of a defined glycan (Glc(3)Man(9)GlcNAc(2) in eukaryotes) from the lipid carrier dolichol-pyrophosphate to an asparagine residue within an Asn-X-Ser/Thr consensus motif in nascent polypeptide chains, the first step in protein N-glycosylation. N-glycosylation occurs cotranslationally and the complex associates with the Sec61 complex at the channel-forming translocon complex that mediates protein translocation across the endoplasmic reticulum (ER). All subunits are required for a maximal enzyme activity. The polypeptide is Dolichyl-diphosphooligosaccharide--protein glycosyltransferase subunit TMEM258 (Danio rerio (Zebrafish)).